The following is a 575-amino-acid chain: 2-isopropylmalate synthase (575 aa).

The Pyruvate carboxyltransferase domain maps to 40–314; that stretch reads PRWCAVDLRD…DPQIDFSDID (275 aa). D49, H253, H255, and N289 together coordinate Mg(2+). Residues 456-575 form a regulatory domain region; it reads SGSGTPEWGR…IVSAVNRALR (120 aa).

The protein belongs to the alpha-IPM synthase/homocitrate synthase family. LeuA type 2 subfamily. In terms of assembly, homodimer. It depends on Mg(2+) as a cofactor.

It is found in the cytoplasm. It catalyses the reaction 3-methyl-2-oxobutanoate + acetyl-CoA + H2O = (2S)-2-isopropylmalate + CoA + H(+). Its pathway is amino-acid biosynthesis; L-leucine biosynthesis; L-leucine from 3-methyl-2-oxobutanoate: step 1/4. Functionally, catalyzes the condensation of the acetyl group of acetyl-CoA with 3-methyl-2-oxobutanoate (2-ketoisovalerate) to form 3-carboxy-3-hydroxy-4-methylpentanoate (2-isopropylmalate). This Kineococcus radiotolerans (strain ATCC BAA-149 / DSM 14245 / SRS30216) protein is 2-isopropylmalate synthase.